Consider the following 493-residue polypeptide: Succinate-semialdehyde dehydrogenase [NADP(+)] 2 (493 aa).

Residue 242–247 (GSTNVG) participates in NAD(+) binding. Glu264 is a catalytic residue. Catalysis depends on Cys298, which acts as the Nucleophile.

Belongs to the aldehyde dehydrogenase family. Homotetramer.

The protein resides in the cytoplasm. It catalyses the reaction succinate semialdehyde + NAD(+) + H2O = succinate + NADH + 2 H(+). The catalysed reaction is succinate semialdehyde + NADP(+) + H2O = succinate + NADPH + 2 H(+). The protein operates within amino-acid degradation; 4-aminobutanoate degradation. Its function is as follows. Catalyzes the oxidation of succinate semialdehyde to succinate. Can utilize both NAD(+) or NADP(+) as a coenzyme. Functions in the GABA shunt, which allows to bypass 2 reactions in the TCA cycle by removing alpha-ketoglutarate from the cycle and feeding succinate and NADH back into the cycle. This Schizosaccharomyces pombe (strain 972 / ATCC 24843) (Fission yeast) protein is Succinate-semialdehyde dehydrogenase [NADP(+)] 2 (ssd2).